The chain runs to 57 residues: uncharacterized protein (57 aa).

The interval 1–57 is disordered; it reads MDDTLPKQMTPTDTSPLKEEQAHCNNKTLENQPKNINDNKCTDSQNTDLQNTEPSKV. Residues 23–57 are compositionally biased toward polar residues; it reads HCNNKTLENQPKNINDNKCTDSQNTDLQNTEPSKV.

This is an uncharacterized protein from Ornithodoros (relapsing fever ticks).